The following is a 235-amino-acid chain: Purine nucleoside phosphorylase DeoD-type (235 aa).

An a purine D-ribonucleoside-binding site is contributed by His-4. Residues Gly-20, Arg-24, Arg-43, and 87 to 90 contribute to the phosphate site; that span reads RVGT. Residues 179–181 and 203–204 each bind a purine D-ribonucleoside; these read EME and SD. Asp-204 functions as the Proton donor in the catalytic mechanism.

It belongs to the PNP/UDP phosphorylase family. As to quaternary structure, homohexamer; trimer of homodimers.

The enzyme catalyses a purine D-ribonucleoside + phosphate = a purine nucleobase + alpha-D-ribose 1-phosphate. It catalyses the reaction a purine 2'-deoxy-D-ribonucleoside + phosphate = a purine nucleobase + 2-deoxy-alpha-D-ribose 1-phosphate. Its function is as follows. Catalyzes the reversible phosphorolytic breakdown of the N-glycosidic bond in the beta-(deoxy)ribonucleoside molecules, with the formation of the corresponding free purine bases and pentose-1-phosphate. The protein is Purine nucleoside phosphorylase DeoD-type of Clostridium perfringens (strain SM101 / Type A).